The following is a 474-amino-acid chain: Tumor necrosis factor receptor superfamily member 1B (474 aa).

The signal sequence occupies residues 1–22 (MAPAALWVALVVELQLWATGHT). Residues 23-258 (VPAKVVLTPY…PIIEPSITGG (236 aa)) lie on the Extracellular side of the membrane. Thr30 is a glycosylation site (O-linked (GalNAc...) threonine). 4 TNFR-Cys repeats span residues 39–77 (QCQI…TVCA), 78–119 (DCAA…NRVC), 120–164 (ACNA…VICS), and 165–203 (ACAP…AVCA). 10 cysteine pairs are disulfide-bonded: Cys40–Cys54, Cys55–Cys68, Cys58–Cys76, Cys79–Cys94, Cys97–Cys111, Cys101–Cys119, Cys121–Cys127, Cys136–Cys145, Cys139–Cys163, and Cys166–Cys181. Asn69 carries N-linked (GlcNAc...) asparagine glycosylation. Asn110 carries an N-linked (GlcNAc...) asparagine glycan. Asn195 carries N-linked (GlcNAc...) asparagine glycosylation. Thr208 and Thr224 each carry an O-linked (GalNAc...) threonine glycan. A compositionally biased stretch (polar residues) spans 220-239 (QPEPTRSQPMDQEPGPSQTP). Residues 220 to 241 (QPEPTRSQPMDQEPGPSQTPHI) form a disordered region. Residues 259-288 (ISLPIGLIVGLTTLGLLMLGLANCFILVQR) form a helical membrane-spanning segment. At 289 to 474 (KKKPSCLQRE…WYDQIAVKVP (186 aa)) the chain is on the cytoplasmic side. Disordered regions lie at residues 321-378 (LTTA…GSHG) and 397-464 (SQCS…NQPG). Composition is skewed to low complexity over residues 324 to 338 (APSS…SASA) and 366 to 378 (GSRS…GSHG). Ser331 bears the Phosphoserine mark. A compositionally biased stretch (polar residues) spans 429–442 (ECPSQSQWETTETL).

Binds to TRAF2. Interacts with BMX. Interacts (activated form) with XPNPEP3.

Its subcellular location is the membrane. In terms of biological role, receptor with high affinity for TNFSF2/TNF-alpha and approximately 5-fold lower affinity for homotrimeric TNFSF1/lymphotoxin-alpha. The TRAF1/TRAF2 complex recruits the apoptotic suppressors BIRC2 and BIRC3 to TNFRSF1B/TNFR2. This Rattus norvegicus (Rat) protein is Tumor necrosis factor receptor superfamily member 1B (Tnfrsf1b).